The primary structure comprises 476 residues: Growth/differentiation factor 10 (476 aa).

An N-terminal signal peptide occupies residues 1–29 (MAPGLARISLRSQLLPLVPLLLLLRGAGC). Positions 30–366 (GHRVPSWSSL…EKTMQKARRR (337 aa)) are excised as a propeptide. N-linked (GlcNAc...) asparagine glycosylation is found at N114, N152, and N277. Disordered stretches follow at residues 268 to 305 (GDFE…LDER) and 330 to 358 (PRTG…FDEK). Intrachain disulfides connect C374–C441, C403–C473, and C407–C475. N-linked (GlcNAc...) asparagine glycosylation occurs at N467.

This sequence belongs to the TGF-beta family. In terms of assembly, homodimer or heterodimer. Can form a non-covalent complex of the mature region and the pro-region. Costa, costicartilage, femur, calvaria, trachea, aorta and brain. Predominantly in the cerebellum.

The protein localises to the secreted. Functionally, growth factor involved in osteogenesis and adipogenesis. Plays an inhibitory role in the process of osteoblast differentiation via SMAD2/3 pathway. Plays an inhibitory role in the process of adipogenesis. In Rattus norvegicus (Rat), this protein is Growth/differentiation factor 10.